A 690-amino-acid polypeptide reads, in one-letter code: DNA-directed RNA polymerase subunit beta' (690 aa).

Cys-76, Cys-78, Cys-94, and Cys-97 together coordinate Zn(2+). Asp-496, Asp-498, and Asp-500 together coordinate Mg(2+).

Belongs to the RNA polymerase beta' chain family. RpoC1 subfamily. As to quaternary structure, in plastids the minimal PEP RNA polymerase catalytic core is composed of four subunits: alpha, beta, beta', and beta''. When a (nuclear-encoded) sigma factor is associated with the core the holoenzyme is formed, which can initiate transcription. Mg(2+) serves as cofactor. The cofactor is Zn(2+).

The protein localises to the plastid. The protein resides in the chloroplast. The enzyme catalyses RNA(n) + a ribonucleoside 5'-triphosphate = RNA(n+1) + diphosphate. Its function is as follows. DNA-dependent RNA polymerase catalyzes the transcription of DNA into RNA using the four ribonucleoside triphosphates as substrates. This chain is DNA-directed RNA polymerase subunit beta', found in Lemna minor (Common duckweed).